A 244-amino-acid polypeptide reads, in one-letter code: Ribosomal RNA large subunit methyltransferase E (244 aa).

Positions 81, 83, 109, 125, and 149 each coordinate S-adenosyl-L-methionine. Lys-189 acts as the Proton acceptor in catalysis.

The protein belongs to the class I-like SAM-binding methyltransferase superfamily. RNA methyltransferase RlmE family.

Its subcellular location is the cytoplasm. It carries out the reaction uridine(2552) in 23S rRNA + S-adenosyl-L-methionine = 2'-O-methyluridine(2552) in 23S rRNA + S-adenosyl-L-homocysteine + H(+). In terms of biological role, specifically methylates the uridine in position 2552 of 23S rRNA at the 2'-O position of the ribose in the fully assembled 50S ribosomal subunit. In Cereibacter sphaeroides (strain ATCC 17023 / DSM 158 / JCM 6121 / CCUG 31486 / LMG 2827 / NBRC 12203 / NCIMB 8253 / ATH 2.4.1.) (Rhodobacter sphaeroides), this protein is Ribosomal RNA large subunit methyltransferase E.